A 399-amino-acid chain; its full sequence is Elongation factor Tu (399 aa).

Residues 10-207 (KPHMNVGTIG…AMDTYFPDPV (198 aa)) enclose the tr-type G domain. The interval 19–26 (GQIDHGKT) is G1. 19 to 26 (GQIDHGKT) contacts GTP. Residue T26 participates in Mg(2+) binding. The G2 stretch occupies residues 60 to 64 (GITIN). The G3 stretch occupies residues 81-84 (DCPG). Residues 81 to 85 (DCPGH) and 136 to 139 (NKVD) each bind GTP. Residues 136–139 (NKVD) are G4. The tract at residues 173–175 (SAL) is G5.

This sequence belongs to the TRAFAC class translation factor GTPase superfamily. Classic translation factor GTPase family. EF-Tu/EF-1A subfamily. As to quaternary structure, monomer.

It is found in the cytoplasm. It catalyses the reaction GTP + H2O = GDP + phosphate + H(+). In terms of biological role, GTP hydrolase that promotes the GTP-dependent binding of aminoacyl-tRNA to the A-site of ribosomes during protein biosynthesis. This is Elongation factor Tu from Fervidobacterium islandicum.